Consider the following 294-residue polypeptide: ATP synthase gamma chain (294 aa).

The protein belongs to the ATPase gamma chain family. As to quaternary structure, F-type ATPases have 2 components, CF(1) - the catalytic core - and CF(0) - the membrane proton channel. CF(1) has five subunits: alpha(3), beta(3), gamma(1), delta(1), epsilon(1). CF(0) has three main subunits: a, b and c.

The protein localises to the cell inner membrane. Produces ATP from ADP in the presence of a proton gradient across the membrane. The gamma chain is believed to be important in regulating ATPase activity and the flow of protons through the CF(0) complex. The sequence is that of ATP synthase gamma chain from Campylobacter jejuni subsp. jejuni serotype O:23/36 (strain 81-176).